Consider the following 437-residue polypeptide: MKEQKLTTENYKGTRDFYPEDMRLRNYLFSVMKDVVRSYGYEEYDGPMVESLDLYRAKTGEEIVGKQIYNFIDKGDREVAIRPEMTPTVARMVAKKLRELPRPIRWFSIPNLWRYEQPGHGRLREHWQLNVDMFGVTSSRAELEILSLACDILFAFGAPKNSFKVTISHRSLLDEFLLDGLKVSPNQAHEVSKILDKKNKITQDEYVALVTKTIPNDSSAVSKIDLFLNATVNSLNQIPGIKEETLAAIKGLFEDIKTIGLSDIIHFDPSVVRGFDYYTGFIFEIFDTSPQNKRSLYGGGRYDNLIGLFSNEELTGIGFGLGDVTLQNFLTAHNLLPNFASDTTVFIPLLDDSSFAENHNFAKELRKEKISAEVSLVSQKMGKQLSYAEKKGYRWILLRGEDEIKTNTVTLKDMASRNQFTFSFSEALQKIKEELSK.

The protein belongs to the class-II aminoacyl-tRNA synthetase family. In terms of assembly, homodimer.

Its subcellular location is the cytoplasm. The catalysed reaction is tRNA(His) + L-histidine + ATP = L-histidyl-tRNA(His) + AMP + diphosphate + H(+). The polypeptide is Histidine--tRNA ligase (Leptospira biflexa serovar Patoc (strain Patoc 1 / Ames)).